Reading from the N-terminus, the 226-residue chain is Killer cell lectin-like receptor subfamily E member 1 (226 aa).

A disordered region spans residues 1-28 (MDEAPVTRSTLNVNSQQKSKAKNKIKNT). The Cytoplasmic portion of the chain corresponds to 1-68 (MDEAPVTRST…GKGNCSPPWR (68 aa)). Over residues 7–18 (TRSTLNVNSQQK) the composition is skewed to polar residues. Residues 69-89 (LLSSVLGAMCLLLMAVAMVMT) traverse the membrane as a helical; Signal-anchor for type II membrane protein segment. Over 90-226 (TFTTKSSSER…ANKLTYICKK (137 aa)) the chain is Extracellular. 3 cysteine pairs are disulfide-bonded: C113-C124, C141-C224, and C202-C216. In terms of domain architecture, C-type lectin spans 120 to 225 (FRCSCYFFSK…CANKLTYICK (106 aa)). N145 carries N-linked (GlcNAc...) asparagine glycosylation.

In terms of assembly, heterodimer; with KLRI1 or KLRI2. Expressed in natural killer (NK) cells (at protein level). Also detected in natural killer T (NKT) cells (at protein level). Has little or no expression in T cells (at protein level).

It localises to the cell membrane. Lectin-like receptor for natural killer (NK) cells. Can either inhibit or activate NK cell cytotoxic activity, depending on its binding partner. Heterodimer formation with KLRI1 mediates NK cell inhibition whereas heterodimer formation with KLRI2 mediates NK cell activation. Plays a role in allogeneic recognition by the immune system. The chain is Killer cell lectin-like receptor subfamily E member 1 from Mus musculus (Mouse).